The sequence spans 104 residues: Cell division protein FtsB (104 aa).

At 1 to 3 (MGK) the chain is on the cytoplasmic side. A helical transmembrane segment spans residues 4 to 21 (LTLLLLVLLGWLQYSLWL). Residues 22 to 104 (GKNGIHDYTR…NAQQGRPASQ (83 aa)) lie on the Periplasmic side of the membrane. The stretch at 33–62 (DEDVASQQGNNAKLKARNDRLFAEIDDLNG) forms a coiled coil.

Belongs to the FtsB family. In terms of assembly, part of a complex composed of FtsB, FtsL and FtsQ.

The protein resides in the cell inner membrane. Functionally, essential cell division protein. May link together the upstream cell division proteins, which are predominantly cytoplasmic, with the downstream cell division proteins, which are predominantly periplasmic. This chain is Cell division protein FtsB, found in Erwinia tasmaniensis (strain DSM 17950 / CFBP 7177 / CIP 109463 / NCPPB 4357 / Et1/99).